The chain runs to 396 residues: General transcription factor IIH subunit 2 (396 aa).

Residues 60-236 (HLYVVVDGSR…HYKELLARHV (177 aa)) form the VWFA domain. Tyrosine 95 is modified (phosphotyrosine). The C4-type zinc-finger motif lies at 292–309 (CPQCRAKYCELPVECKIC).

It belongs to the GTF2H2 family. In terms of assembly, component of the TFIID-containing RNA polymerase II pre-initiation complex that is composed of TBP and at least GTF2A1, GTF2A2, GTF2E1, GTF2E2, GTF2F1, GTF2H2, GTF2H3, GTF2H4, GTF2H5, GTF2B, TCEA1, ERCC2 and ERCC3. Component of the 7-subunit TFIIH core complex composed of XPB/ERCC3, XPD/ERCC2, GTF2H1, GTF2H2, GTF2H3, GTF2H4 and GTF2H5, which is active in NER. The core complex associates with the 3-subunit CDK-activating kinase (CAK) module composed of CCNH/cyclin H, CDK7 and MNAT1 to form the 10-subunit holoenzyme (holo-TFIIH) active in transcription. Interacts with XPB, XPD, GTF2H1 and GTF2H3.

The protein localises to the nucleus. Functionally, component of the general transcription and DNA repair factor IIH (TFIIH) core complex, which is involved in general and transcription-coupled nucleotide excision repair (NER) of damaged DNA and, when complexed to CAK, in RNA transcription by RNA polymerase II. In NER, TFIIH acts by opening DNA around the lesion to allow the excision of the damaged oligonucleotide and its replacement by a new DNA fragment. In transcription, TFIIH has an essential role in transcription initiation. When the pre-initiation complex (PIC) has been established, TFIIH is required for promoter opening and promoter escape. Phosphorylation of the C-terminal tail (CTD) of the largest subunit of RNA polymerase II by the kinase module CAK controls the initiation of transcription. The N-terminus of GTF2H2 interacts with and regulates XPD whereas an intact C-terminus is required for a successful escape of RNAP II form the promoter. In Rattus norvegicus (Rat), this protein is General transcription factor IIH subunit 2 (Gtf2h2).